The following is a 477-amino-acid chain: Argininosuccinate lyase (477 aa).

Belongs to the lyase 1 family. Argininosuccinate lyase subfamily.

The protein localises to the cytoplasm. The enzyme catalyses 2-(N(omega)-L-arginino)succinate = fumarate + L-arginine. It participates in amino-acid biosynthesis; L-arginine biosynthesis; L-arginine from L-ornithine and carbamoyl phosphate: step 3/3. This is Argininosuccinate lyase from Corynebacterium glutamicum (strain R).